The primary structure comprises 595 residues: RuBisCO large subunit-binding protein subunit beta, chloroplastic (595 aa).

The N-terminal 49 residues, 1-49 (MASTFSATTSSCNLSSSAAISSFPLAAGKRNANKVVLPRKNRNVKVSAM), are a transit peptide targeting the chloroplast.

It belongs to the chaperonin (HSP60) family. As to quaternary structure, oligomer of probably six alpha and six beta subunits.

It is found in the plastid. The protein resides in the chloroplast. In terms of biological role, this protein binds RuBisCO small and large subunits and is implicated in the assembly of the enzyme oligomer. The polypeptide is RuBisCO large subunit-binding protein subunit beta, chloroplastic (Pisum sativum (Garden pea)).